Reading from the N-terminus, the 52-residue chain is Large ribosomal subunit protein bL33 (52 aa).

This sequence belongs to the bacterial ribosomal protein bL33 family.

This is Large ribosomal subunit protein bL33 from Anaeromyxobacter sp. (strain Fw109-5).